The following is a 243-amino-acid chain: MRHTLFISDLHLEEKTPSITAHFLYFLKHQAPKADAIYILGDFFEAWIGDDNQTPFNRKIIESLQTLARTKPTYFMRGNRDFLIGQRFAAMTGVSLLEDPSVIQLYNKPVLLMHGDSLCTLDHKHQAYRRKIMKPWVQKLMLSLPLSLRRKLAKKFREQSRRHNRTLSYEIKDVTPEEVNRVMKEQNVELLIHGHTHRPAIHDLTINGNPTKRIVLGAWHHGGSVLRYAQDGSFELQAFKIDL.

Mn(2+)-binding residues include Asp-9, His-11, Asp-42, Asn-79, and His-114. 79-80 (NR) is a substrate binding site. Substrate-binding residues include Asp-122, Ser-160, Asn-164, and His-195. Mn(2+) contacts are provided by His-195 and His-197.

The protein belongs to the LpxH family. It depends on Mn(2+) as a cofactor.

The protein localises to the cell inner membrane. It carries out the reaction UDP-2-N,3-O-bis[(3R)-3-hydroxytetradecanoyl]-alpha-D-glucosamine + H2O = 2-N,3-O-bis[(3R)-3-hydroxytetradecanoyl]-alpha-D-glucosaminyl 1-phosphate + UMP + 2 H(+). It participates in glycolipid biosynthesis; lipid IV(A) biosynthesis; lipid IV(A) from (3R)-3-hydroxytetradecanoyl-[acyl-carrier-protein] and UDP-N-acetyl-alpha-D-glucosamine: step 4/6. Hydrolyzes the pyrophosphate bond of UDP-2,3-diacylglucosamine to yield 2,3-diacylglucosamine 1-phosphate (lipid X) and UMP by catalyzing the attack of water at the alpha-P atom. Involved in the biosynthesis of lipid A, a phosphorylated glycolipid that anchors the lipopolysaccharide to the outer membrane of the cell. The chain is UDP-2,3-diacylglucosamine hydrolase from Coxiella burnetii (strain RSA 331 / Henzerling II).